The primary structure comprises 252 residues: Eukaryotic translation initiation factor 3 subunit J (252 aa).

Disordered stretches follow at residues 24–107 (VPAG…TPEE) and 209–232 (KQSK…TMKD). The segment covering 36–56 (EDEEDDVKDNWDDEEEEEEVK) has biased composition (acidic residues). Residues 57 to 107 (EAEVKQEPKVSEKKKIAEKIKEKEKQQKKKQEELKKRLEAPEEHKELTPEE) show a composition bias toward basic and acidic residues. Positions 65 to 130 (KVSEKKKIAE…ESDLELAKET (66 aa)) form a coiled coil.

It belongs to the eIF-3 subunit J family. Component of the eukaryotic translation initiation factor 3 (eIF-3) complex, which is composed of 13 subunits: EIF3A, EIF3B, EIF3C, EIF3D, EIF3E, EIF3F, EIF3G, EIF3H, EIF3I, EIF3J, EIF3K, EIF3L and EIF3M.

It localises to the cytoplasm. Component of the eukaryotic translation initiation factor 3 (eIF-3) complex, which is involved in protein synthesis of a specialized repertoire of mRNAs and, together with other initiation factors, stimulates binding of mRNA and methionyl-tRNAi to the 40S ribosome. The eIF-3 complex specifically targets and initiates translation of a subset of mRNAs involved in cell proliferation. This is Eukaryotic translation initiation factor 3 subunit J from Gallus gallus (Chicken).